We begin with the raw amino-acid sequence, 180 residues long: Trafficking protein particle complex subunit 3 (180 aa).

Residue cysteine 68 is the site of S-palmitoyl cysteine attachment.

Belongs to the TRAPP small subunits family. BET3 subfamily. Homodimer. Part of the multisubunit TRAPP (transport protein particle) complex.

Its subcellular location is the golgi apparatus. The protein localises to the cis-Golgi network. It is found in the endoplasmic reticulum. Functionally, may play a role in vesicular transport from endoplasmic reticulum to Golgi. This chain is Trafficking protein particle complex subunit 3 (TRAPPC3), found in Gallus gallus (Chicken).